The primary structure comprises 183 residues: uncharacterized protein (183 aa).

A compositionally biased stretch (low complexity) spans 105 to 149 (YNTNNSNTNTNYNNNNNNNNNNNNNNNNNNNKNNNNNNNNNNSNS). The interval 105 to 151 (YNTNNSNTNTNYNNNNNNNNNNNNNNNNNNNKNNNNNNNNNNSNSKI) is disordered.

This is an uncharacterized protein from Dictyostelium discoideum (Social amoeba).